Reading from the N-terminus, the 318-residue chain is Myoblast determination protein 1 (318 aa).

Met1 is covalently cross-linked (Peptide (Met-Gly) (interchain with G-Cter in ubiquitin)). An N6-methyllysine; by EHMT2 modification is found at Lys104. In terms of domain architecture, bHLH spans 109-160 (DRRKAATMRERRRLSKVNEAFETLKRCTSSNPNQRLPKVEILRNAIRYIEGL). 2 disordered regions span residues 175–225 (AAFY…QNGY) and 265–318 (APAL…YQVL). Positions 196 to 206 (SDASSPRSNCS) are enriched in polar residues. The span at 265–274 (APALLLADAP) shows a compositional bias: low complexity. 2 stretches are compositionally biased toward polar residues: residues 287 to 298 (LSDTEQGTQTPS) and 307 to 318 (AGSNPNAIYQVL).

Interacts with SUV39H1. Efficient DNA binding requires dimerization with another bHLH protein. Seems to form active heterodimers with ITF-2. Interacts with DDX5. Interacts with CHD2. Interacts with TSC22D3 isoform 1 and isoform 4. Interacts with SETD3. Interacts with P-TEFB complex; promotes the transcriptional activity of MYOD1 through its CDK9-mediated phosphorylation. Interacts with CSRP3. Interacts with NUPR1. Acetylated by a complex containing EP300 and PCAF. The acetylation is essential to activate target genes. Conversely, its deacetylation by SIRT1 inhibits its function. In terms of processing, ubiquitinated on the N-terminus; which is required for proteasomal degradation. Post-translationally, phosphorylated by CDK9. This phosphorylation promotes its function in muscle differentiation. Methylation at Lys-104 by EHMT2/G9a inhibits myogenic activity.

The protein localises to the nucleus. Acts as a transcriptional activator that promotes transcription of muscle-specific target genes and plays a role in muscle differentiation. Together with MYF5 and MYOG, co-occupies muscle-specific gene promoter core region during myogenesis. Induces fibroblasts to differentiate into myoblasts. Interacts with and is inhibited by the twist protein. This interaction probably involves the basic domains of both proteins. The sequence is that of Myoblast determination protein 1 (Myod1) from Mus musculus (Mouse).